Reading from the N-terminus, the 426-residue chain is Glutamate-1-semialdehyde 2,1-aminomutase (426 aa).

Position 265 is an N6-(pyridoxal phosphate)lysine (K265).

This sequence belongs to the class-III pyridoxal-phosphate-dependent aminotransferase family. HemL subfamily. As to quaternary structure, homodimer. The cofactor is pyridoxal 5'-phosphate.

It is found in the cytoplasm. The catalysed reaction is (S)-4-amino-5-oxopentanoate = 5-aminolevulinate. Its pathway is porphyrin-containing compound metabolism; protoporphyrin-IX biosynthesis; 5-aminolevulinate from L-glutamyl-tRNA(Glu): step 2/2. The sequence is that of Glutamate-1-semialdehyde 2,1-aminomutase from Cronobacter sakazakii (strain ATCC BAA-894) (Enterobacter sakazakii).